Here is a 197-residue protein sequence, read N- to C-terminus: Elongation factor Ts (197 aa).

Residues Thr81–Val84 are involved in Mg(2+) ion dislocation from EF-Tu.

The protein belongs to the EF-Ts family.

Its subcellular location is the cytoplasm. Its function is as follows. Associates with the EF-Tu.GDP complex and induces the exchange of GDP to GTP. It remains bound to the aminoacyl-tRNA.EF-Tu.GTP complex up to the GTP hydrolysis stage on the ribosome. This chain is Elongation factor Ts, found in Coprothermobacter proteolyticus (strain ATCC 35245 / DSM 5265 / OCM 4 / BT).